We begin with the raw amino-acid sequence, 626 residues long: Threonine--tRNA ligase (626 aa).

The interval 1–144 (MRMLLIHADY…LSRTIVPEEG (144 aa)) is editing domain. A catalytic region spans residues 207–506 (PHVRLMLEHE…QAQGKKPMFP (300 aa)). Cysteine 299, histidine 351, and histidine 475 together coordinate Zn(2+).

Belongs to the class-II aminoacyl-tRNA synthetase family. As to quaternary structure, homodimer. It depends on Zn(2+) as a cofactor.

The protein localises to the cytoplasm. It carries out the reaction tRNA(Thr) + L-threonine + ATP = L-threonyl-tRNA(Thr) + AMP + diphosphate + H(+). Functionally, catalyzes the attachment of threonine to tRNA(Thr) in a two-step reaction: L-threonine is first activated by ATP to form Thr-AMP and then transferred to the acceptor end of tRNA(Thr). Also edits incorrectly charged L-seryl-tRNA(Thr). The sequence is that of Threonine--tRNA ligase from Thermococcus gammatolerans (strain DSM 15229 / JCM 11827 / EJ3).